A 480-amino-acid polypeptide reads, in one-letter code: Adenosylhomocysteinase (480 aa).

Residues Thr-63, Asp-142, and Glu-203 each coordinate substrate. 204–206 (TTT) provides a ligand contact to NAD(+). Lys-233 and Asp-237 together coordinate substrate. NAD(+) contacts are provided by residues Asn-238, 267–272 (GYGDVG), Glu-290, Asn-325, 346–348 (IGH), and Asn-394.

The protein belongs to the adenosylhomocysteinase family. It depends on NAD(+) as a cofactor.

The protein localises to the cytoplasm. The enzyme catalyses S-adenosyl-L-homocysteine + H2O = L-homocysteine + adenosine. Its pathway is amino-acid biosynthesis; L-homocysteine biosynthesis; L-homocysteine from S-adenosyl-L-homocysteine: step 1/1. In terms of biological role, may play a key role in the regulation of the intracellular concentration of adenosylhomocysteine. The protein is Adenosylhomocysteinase of Xanthomonas axonopodis pv. citri (strain 306).